A 79-amino-acid chain; its full sequence is Translation initiation factor IF-1, chloroplastic (79 aa).

The 74-residue stretch at 1 to 74 (MTRKNIDLIE…HRGRITFRLR (74 aa)) folds into the S1-like domain.

Belongs to the IF-1 family. As to quaternary structure, component of the 30S ribosomal translation pre-initiation complex which assembles on the 30S ribosome in the order IF-2 and IF-3, IF-1 and N-formylmethionyl-tRNA(fMet); mRNA recruitment can occur at any time during PIC assembly.

The protein resides in the plastid. It is found in the chloroplast. One of the essential components for the initiation of protein synthesis. Stabilizes the binding of IF-2 and IF-3 on the 30S subunit to which N-formylmethionyl-tRNA(fMet) subsequently binds. Helps modulate mRNA selection, yielding the 30S pre-initiation complex (PIC). Upon addition of the 50S ribosomal subunit IF-1, IF-2 and IF-3 are released leaving the mature 70S translation initiation complex. The protein is Translation initiation factor IF-1, chloroplastic of Chlorella vulgaris (Green alga).